The sequence spans 148 residues: MQKSSMLKKEAAIARRQWYLVDATDLVLGRLSVKVADILRGKNKVDYTPNVDAGDYVIIVNSDKVVLTGQKALRENWYNHSHYIGGLRTRSGEEMISKYSDELIRRSVKGMLPKNKLSKQILNKLFIYKNDKHSHEAQQPTILELKLK.

The protein belongs to the universal ribosomal protein uL13 family. As to quaternary structure, part of the 50S ribosomal subunit.

Its function is as follows. This protein is one of the early assembly proteins of the 50S ribosomal subunit, although it is not seen to bind rRNA by itself. It is important during the early stages of 50S assembly. The protein is Large ribosomal subunit protein uL13 of Ureaplasma urealyticum serovar 10 (strain ATCC 33699 / Western).